The sequence spans 139 residues: Large ribosomal subunit protein uL22c (139 aa).

Belongs to the universal ribosomal protein uL22 family. In terms of assembly, part of the 50S ribosomal subunit.

It is found in the plastid. Its subcellular location is the chloroplast. In terms of biological role, this protein binds specifically to 23S rRNA. Functionally, the globular domain of the protein is located near the polypeptide exit tunnel on the outside of the subunit, while an extended beta-hairpin is found that lines the wall of the exit tunnel in the center of the 70S ribosome. The chain is Large ribosomal subunit protein uL22c (rpl22) from Cycas taitungensis (Prince sago).